A 2801-amino-acid chain; its full sequence is MASKERLYELWMLYYTKKDVVYLQQWLEAFVASFEKVIDVHSIEPRRLEEWSADVPLLPKEVLVFLSTQLWHSALHMSGQDQSITAPHPLLLIKFFIIICRNMENIDSEKTPGFVFETIKLLNFCLAQLKKQPDDQSTLQAVVQHGLLLCENLFDPYQTWRRRQAGEEVSMLERSKYKFSPLVLPEELPMLFHEYLQDSELIPEPLVVRLVHLQGAVISGCKRNGLLSITPQAVKDLMSVLRSWCLCPASSPQQPRDPQLLRMALRCLTVMIHLLHSSSVNERQVEIRSALDDYFQLLNWNRPPDSQQGDMHAWEDNLITLLEHMLNAIPEILQCSDRPVLQAIFLNNNCFEHILRLIQNSKLYQSNRFKLECEGQCDLTTRLLTESEVEQVWEKGSDCITVHAIRVLTAIMSNSPSAKEVFKERIGYSQLFDVLKSQGQPTKRLLQELMNMAVEGEHSQAMQLGISNEQPLLLLLQWLPDLGSRSLQLLVSQWLAAVCRGTLSCRTVSVEAGLVGSLLEVLSEPPERLDRQCADSLLGLLQDLGSLSLRPCELKSLLKLLRTEPGAPPHPYCGRVVRVLSAMAARGEGGCSALQYFDLTPPMAGIMVPAIQRWPGSAFAFHAWLCLNTDFPPPQHHYSESHLTNMDNTVRMAKGPRRKQLYSFFTASGTGFEAFFTTEEVLVVAVCTKKEYMAVSLPEHPFNDCAWHSVAIVHVPGRRPFGQNVVTVYVDGVQCKTAPLRFPSLNEPFTSCCIGSAGHRTTTTTMTTSPTLPNPPHSPSEMAFAAHTGPPTLLRSQSFPASFAAAAGGRPGGNRESPVHTIQAGLQDTAWGSPSSLGGLLATAFICHEALQPAQARALFTAGPNNVSLFKADGEPSEVNSKLVLYYTPKAFKSQICLDLSPNHLYDGRLTGHRVVNWDVKDVLSSVGGMGALLPLLEQVCLLDQRETVGQETSDLLGPELTSSRGPAGMLLPLGKSSEGRLEKNSVAAFLLMIKNMLRNHPANQESLLQCHGPAIIGAMLGKVPSSMMDMSVLMACQFLLKQVSNEGNNALLSQLYQYLLFDFRIWSRSHFAVCLGHVQYLTTVINEGKLKTRRKYGVQYILDSIRTHYSVEKDGSPLSDERQTVQISLFSLLKDLLKSPTAEELHSVLAYAAIVQDEQQVISVLDVLHTVLKSSPPPREQVVTVLLDRRVEQLYYLLLKTNYGDEARERLFRVMYKVLKSERVHDRNKQLIKLKDSGYLGLVCSFGDVPITMTTVRCLYEQVLATDPTPSFKDLLAVVYLSHRADLSARLEIVRKLFCLIHSNEEYVKQLAHQSGWQDVLTKLYVKESYESRVRSQSNSLSSPTSSLDPVLSRPVFRRDDSVTEDVRQNVYITLAARHEEEYEEEEGETQDASEGFSDLSQSPPSTGQLKNDSLHFKPFDSGDQSSHSSTLSNTVDFPPSRLQEEDEAVYQPLSPFGSPFELELNHQKGPQTPVGSQPETPSPLEHNKTFLGMRPRKSSSLSNVLDDTSYSTEPPTDTISNTSNPQAPEEELCNLLTNIVFSVLWIGTEGSEDVIWRERGQVFSVLTKLGSSCQLVRPPDDIKRSLLEMMLESSLSDLRDSQGVSLPHVPSLLRLLRLLQDFLFAEGTCNHTLWSEKIFEGVVNLLDRLKAWHTTPGSAGSAELKEMSLIGLRIITGYIQQQQNPQVCEMACLKLHSLLQTVLCLSWEEVCFLLGRLGAPLCPANSASDTSAEGLPSPLVPIVRALLDQHADHTTLQEKLPNLPATNGSPSFAQDLQIYCSTAEWQQFYQNHVEPTMQQYELDTFGKSHDLMSNFWNSCFDDLMSTGQRRDKERSDSKAKFQEVIVDPYLKRVRTENSRYHSVQKMINGQQTVVWRHWRSLRRLLSSDRGAWPLRVQPEVKWKLSSAETYSKMRLKLVPNYSFDSHSDASALRDNMGADSPRSSTEPLPLAVAREAKVSDMDDDKLEDEDIVFLEEAEEAEEESQKEKLVLSEDCELITIVAVVPGRLEVTTHHLYFYDGSSEKEETEEGIGFDFKRPLSQLREVHLRRYNLRRSALELFFIDQSHYFINFRKGVRNKVYSRILGLRPPNLFYFGSRSPQELLKASNLTHRWVCREISNFEYLMQLNTIAGRTYNDLSQYPVFPWVLCDYTSAELDLDDPAVFRDLSKPIGVVNPRHAQNVREKYESFEDPTGTIDKFHYGTHYSNAAGVMHYMIRTEPFTSLHIQLQSGKFDCADRQFHSIAAAWQARMESPADVKELIPEFFYFPEFLENMNGFDLGCLQISQEKVNNVLLPPWASSREDFIRKHRKALESEHVSAHLHEWIDLIFGYKQRGPEAVEALNVFYYCTYEGAVDLDAIANETERKALEGIISNFGQTPCQLLKEPHPPRMSAENAFRRAARLDILPPNLFDQLSKLRSFKEVVSDGLALVQAVVPRNQTRSFIIPGSDILVTVSANGMIGTHSWLPYDKNIANYFTFTRDPSVSNPKTQRFLSGPFSPGVEMGSQVLVVSSDGRLLFSGGHWDCSLRVTMLGKAKLVGRICRHIDVVTCLALDLCGIYLISGSRDTTCMVWQVLQQGGFSSGLSPRPIQVLCGHDQEVTCVAISTELDMAISGSKDGTVIVHSVRRGQYLWTLRPPCENCVSAPVAQLEVGMEGHIVMQTVLEGRSAGKERYALHVYSVNGTLLASETLDEKISALYLVPDYLIVGTQQGNLHIRDLYSLNLAVAPLALKVPVRCVSVTKESSHILVGLEDGKLIVVGAGKPEEVRSGQFSRRLWGSTRRISQVSSGETEYNPVEAPAK.

The segment at 1379 to 1529 (RHEEEYEEEE…TISNTSNPQA (151 aa)) is disordered. Over residues 1383–1393 (EYEEEEGETQD) the composition is skewed to acidic residues. Polar residues-rich tracts occupy residues 1400-1413 (DLSQ…QLKN), 1424-1437 (GDQS…SNTV), 1470-1481 (KGPQTPVGSQPE), and 1500-1528 (SSSL…SNPQ). The 101-residue stretch at 1986–2086 (SQKEKLVLSE…VRNKVYSRIL (101 aa)) folds into the BEACH-type PH domain. In terms of domain architecture, BEACH spans 2099–2391 (RSPQELLKAS…QLLKEPHPPR (293 aa)). 7 WD repeats span residues 2431–2468 (LVQA…SWLP), 2492–2535 (RFLS…MLGK), 2538–2575 (LVGR…VWQV), 2588–2626 (RPIQ…VHSV), 2633–2676 (WTLR…RYAL), 2684–2719 (TLLA…IRDL), and 2727–2762 (APLA…VGAG).

This sequence belongs to the WD repeat neurobeachin family.

Its subcellular location is the endoplasmic reticulum. In terms of biological role, involved in thrombopoiesis. Plays a role in the development or secretion of alpha-granules, that contain several growth factors important for platelet biogenesis. In Danio rerio (Zebrafish), this protein is Neurobeachin-like protein 2 (nbeal2).